The following is a 561-amino-acid chain: Foot protein 1 variant 1 (561 aa).

The first 20 residues, 1–20, serve as a signal peptide directing secretion; sequence MARNMNILTLFAVLIGSASA. Tyr22 bears the 3',4'-dihydroxyphenylalanine mark. Pro33 carries the post-translational modification 4-hydroxyproline. One copy of the A-1; approximate repeat lies at 41–50; sequence VHPPAWTAWK. The tract at residues 41-410 is 13 X 10 AA A-P-P-P-A-W-T-A-W-K; the sequence is VHPPAWTAWK…APPPAWTAWK (370 aa). Residues Trp46, Trp49, Trp56, and Trp59 each carry the 7'-hydroxytryptophan modification. C-linked (Man) hydroxytryptophan glycosylation is found at Trp46, Trp49, Trp56, and Trp59. The stretch at 51-60 is one A-2; approximate repeat; it reads AHPPAWTAWK. One copy of the B-1 repeat lies at 61–70; it reads ATPKPWTAWK. The interval 61–440 is 27 X 10 AA A-T-P-K-P-W-T-A-W-K; the sequence is ATPKPWTAWK…ATPKPWTAWR (380 aa). Pro65 is subject to 4-hydroxyproline. C-linked (Man) tryptophan glycosylation is present at Trp66. Trp69 carries the post-translational modification 7'-hydroxytryptophan. A glycan (C-linked (Man) hydroxytryptophan) is linked at Trp69. The stretch at 71-80 is one A-3 repeat; sequence APPPAWTAWK. Residues Pro72, Pro73, and Pro74 each carry the 4-hydroxyproline modification. 7'-hydroxytryptophan is present on residues Trp76 and Trp79. 2 C-linked (Man) hydroxytryptophan glycosylation sites follow: Trp76 and Trp79. The stretch at 81 to 90 is one B-2 repeat; the sequence is ATPKPWTAWK. 4-hydroxyproline is present on Pro85. C-linked (Man) tryptophan glycosylation occurs at Trp86. Trp89 carries the post-translational modification 7'-hydroxytryptophan. A glycan (C-linked (Man) hydroxytryptophan) is linked at Trp89. One copy of the A-4; approximate repeat lies at 91-100; sequence APPPTWTAWK. Residues Pro92, Pro93, and Pro94 each carry the 4-hydroxyproline modification. Residues Trp96 and Trp99 each carry the 7'-hydroxytryptophan modification. 2 C-linked (Man) hydroxytryptophan glycosylation sites follow: Trp96 and Trp99. The stretch at 101 to 110 is one B-3 repeat; that stretch reads ATPKPWTAWK. The residue at position 105 (Pro105) is a 4-hydroxyproline. The C-linked (Man) tryptophan glycan is linked to Trp106. A 7'-hydroxytryptophan modification is found at Trp109. Trp109 carries C-linked (Man) hydroxytryptophan glycosylation. An A-5 repeat occupies 111 to 120; it reads APPPAWTAWK. Pro112, Pro113, and Pro114 each carry 4-hydroxyproline. A 7'-hydroxytryptophan mark is found at Trp116 and Trp119. 2 C-linked (Man) hydroxytryptophan glycosylation sites follow: Trp116 and Trp119. The stretch at 121–130 is one B-4; approximate repeat; that stretch reads ATLKPWTAWK. A 4-hydroxyproline modification is found at Pro125. A glycan (C-linked (Man) tryptophan) is linked at Trp126. Residue Trp129 is modified to 7'-hydroxytryptophan. The C-linked (Man) hydroxytryptophan glycan is linked to Trp129. The stretch at 131–140 is one B-5 repeat; sequence ATPKPWTAWK. Pro135 carries the 4-hydroxyproline modification. Trp136 carries C-linked (Man) tryptophan glycosylation. Trp139 carries the 7'-hydroxytryptophan modification. Residue Trp139 is glycosylated (C-linked (Man) hydroxytryptophan). The stretch at 141–150 is one B-6 repeat; the sequence is ATPKPWTAWK. A 4-hydroxyproline modification is found at Pro145. A C-linked (Man) tryptophan glycan is attached at Trp146. Trp149 bears the 7'-hydroxytryptophan mark. Trp149 is a glycosylation site (C-linked (Man) hydroxytryptophan). The B-7 repeat unit spans residues 151-160; that stretch reads ATPKPWTAWK. Residue Pro155 is modified to 4-hydroxyproline. Residue Trp156 is glycosylated (C-linked (Man) tryptophan). A 7'-hydroxytryptophan modification is found at Trp159. A C-linked (Man) hydroxytryptophan glycan is attached at Trp159. One copy of the B-8 repeat lies at 161–170; sequence ATPKPWTAWK. Pro165 is subject to 4-hydroxyproline. Residue Trp166 is glycosylated (C-linked (Man) tryptophan). The residue at position 169 (Trp169) is a 7'-hydroxytryptophan. Trp169 is a glycosylation site (C-linked (Man) hydroxytryptophan). Residues 171 to 180 form a B-9; approximate repeat; it reads ATPKPWTVWK. The residue at position 175 (Pro175) is a 4-hydroxyproline. A glycan (C-linked (Man) tryptophan) is linked at Trp176. 7'-hydroxytryptophan is present on Trp179. A glycan (C-linked (Man) hydroxytryptophan) is linked at Trp179. The B-10 repeat unit spans residues 181–190; it reads ATPKPWTAWK. Residue Pro185 is modified to 4-hydroxyproline. A C-linked (Man) tryptophan glycan is attached at Trp186. Trp189 carries the post-translational modification 7'-hydroxytryptophan. The C-linked (Man) hydroxytryptophan glycan is linked to Trp189. A B-11 repeat occupies 191-200; sequence ATPKPWTAWK. Pro195 is modified (4-hydroxyproline). Trp196 carries C-linked (Man) tryptophan glycosylation. 7'-hydroxytryptophan is present on Trp199. A C-linked (Man) hydroxytryptophan glycan is attached at Trp199. The stretch at 201-210 is one A-6; approximate repeat; that stretch reads APPPAWSAWK. Pro202, Pro203, and Pro204 each carry 4-hydroxyproline. Residues Trp206 and Trp209 each carry the 7'-hydroxytryptophan modification. 2 C-linked (Man) hydroxytryptophan glycosylation sites follow: Trp206 and Trp209. One copy of the B-12; approximate repeat lies at 211-220; sequence ATPKPWTVWK. Pro215 carries the post-translational modification 4-hydroxyproline. Trp216 carries C-linked (Man) tryptophan glycosylation. Trp219 carries the 7'-hydroxytryptophan modification. A C-linked (Man) hydroxytryptophan glycan is attached at Trp219. Residues 221-230 form a B-13 repeat; sequence ATPKPWTAWK. Pro225 carries the 4-hydroxyproline modification. The C-linked (Man) tryptophan glycan is linked to Trp226. Position 229 is a 7'-hydroxytryptophan (Trp229). A C-linked (Man) hydroxytryptophan glycan is attached at Trp229. One copy of the B-14 repeat lies at 231–240; sequence ATPKPWTAWK. Residue Pro235 is modified to 4-hydroxyproline. A glycan (C-linked (Man) tryptophan) is linked at Trp236. Trp239 carries the 7'-hydroxytryptophan modification. C-linked (Man) hydroxytryptophan glycosylation occurs at Trp239. Residues 241–250 form a B-15; approximate repeat; it reads ATPKPWTVWK. The residue at position 245 (Pro245) is a 4-hydroxyproline. A glycan (C-linked (Man) tryptophan) is linked at Trp246. Trp249 is subject to 7'-hydroxytryptophan. The C-linked (Man) hydroxytryptophan glycan is linked to Trp249. The stretch at 251–260 is one B-16 repeat; the sequence is ATPKPWTAWK. Pro255 is modified (4-hydroxyproline). A C-linked (Man) tryptophan glycan is attached at Trp256. Trp259 is subject to 7'-hydroxytryptophan. C-linked (Man) hydroxytryptophan glycosylation occurs at Trp259. Residues 261–270 form an A-7 repeat; the sequence is APPPAWTAWK. 3 positions are modified to 4-hydroxyproline: Pro262, Pro263, and Pro264. Trp266 and Trp269 each carry 7'-hydroxytryptophan. 2 C-linked (Man) hydroxytryptophan glycosylation sites follow: Trp266 and Trp269. A B-17 repeat occupies 271-280; it reads ATPKPWTAWK. Pro275 bears the 4-hydroxyproline mark. Trp276 is a glycosylation site (C-linked (Man) tryptophan). Trp279 is subject to 7'-hydroxytryptophan. Trp279 is a glycosylation site (C-linked (Man) hydroxytryptophan). The A-8; approximate repeat unit spans residues 281-290; it reads APPPTWTAWK. Pro282, Pro283, and Pro284 each carry 4-hydroxyproline. Residues Trp286 and Trp289 each carry the 7'-hydroxytryptophan modification. Trp286 and Trp289 each carry a C-linked (Man) hydroxytryptophan glycan. The stretch at 291-300 is one B-18 repeat; sequence ATPKPWTAWK. At Pro295 the chain carries 4-hydroxyproline. C-linked (Man) tryptophan glycosylation occurs at Trp296. Trp299 is subject to 7'-hydroxytryptophan. Residue Trp299 is glycosylated (C-linked (Man) hydroxytryptophan). Residues 301-310 form an A-9; approximate repeat; that stretch reads APPPAWSAWK. 4-hydroxyproline is present on residues Pro302, Pro303, and Pro304. 2 positions are modified to 7'-hydroxytryptophan: Trp306 and Trp309. C-linked (Man) hydroxytryptophan glycans are attached at residues Trp306 and Trp309. The stretch at 311–320 is one B-19 repeat; it reads ATPKPWTAWK. At Pro315 the chain carries 4-hydroxyproline. The C-linked (Man) tryptophan glycan is linked to Trp316. Position 319 is a 7'-hydroxytryptophan (Trp319). C-linked (Man) hydroxytryptophan glycosylation is present at Trp319. A B-20 repeat occupies 321–330; the sequence is ATPKPWTAWK. Residue Pro325 is modified to 4-hydroxyproline. Trp326 is a glycosylation site (C-linked (Man) tryptophan). Trp329 is modified (7'-hydroxytryptophan). Residue Trp329 is glycosylated (C-linked (Man) hydroxytryptophan). Residues 331-340 form a B-21 repeat; the sequence is ATPKPWTAWK. A 4-hydroxyproline modification is found at Pro335. A glycan (C-linked (Man) tryptophan) is linked at Trp336. The residue at position 339 (Trp339) is a 7'-hydroxytryptophan. Trp339 carries a C-linked (Man) hydroxytryptophan glycan. A B-22 repeat occupies 341 to 350; that stretch reads ATPKPWTAWK. Residue Pro345 is modified to 4-hydroxyproline. C-linked (Man) tryptophan glycosylation occurs at Trp346. Residue Trp349 is modified to 7'-hydroxytryptophan. A glycan (C-linked (Man) hydroxytryptophan) is linked at Trp349. The A-10; approximate repeat unit spans residues 351-360; the sequence is VPPPAWTAWK. Residues Pro352, Pro353, and Pro354 each carry the 4-hydroxyproline modification. A 7'-hydroxytryptophan mark is found at Trp356, Trp359, Trp366, and Trp369. C-linked (Man) hydroxytryptophan glycans are attached at residues Trp356, Trp359, Trp366, and Trp369. One copy of the A-11; approximate repeat lies at 361-370; it reads AHPPAWTAWK. One copy of the B-23 repeat lies at 371–380; sequence ATPKPWTAWK. Position 375 is a 4-hydroxyproline (Pro375). Residue Trp376 is glycosylated (C-linked (Man) tryptophan). Position 379 is a 7'-hydroxytryptophan (Trp379). A glycan (C-linked (Man) hydroxytryptophan) is linked at Trp379. Residues 381–390 form an A-12 repeat; it reads APPPAWTAWK. 3 positions are modified to 4-hydroxyproline: Pro382, Pro383, and Pro384. Residues Trp386 and Trp389 each carry the 7'-hydroxytryptophan modification. Residues Trp386 and Trp389 are each glycosylated (C-linked (Man) hydroxytryptophan). One copy of the B-24 repeat lies at 391–400; it reads ATPKPWTAWK. Pro395 is subject to 4-hydroxyproline. A C-linked (Man) tryptophan glycan is attached at Trp396. Residue Trp399 is modified to 7'-hydroxytryptophan. A C-linked (Man) hydroxytryptophan glycan is attached at Trp399. The stretch at 401–410 is one A-13 repeat; the sequence is APPPAWTAWK. Residues Pro402, Pro403, and Pro404 each carry the 4-hydroxyproline modification. 7'-hydroxytryptophan occurs at positions 406 and 409. C-linked (Man) hydroxytryptophan glycans are attached at residues Trp406 and Trp409. The B-25 repeat unit spans residues 411-420; sequence ATPKPWTAWK. Pro415 is subject to 4-hydroxyproline. Trp416 carries a C-linked (Man) tryptophan glycan. Trp419 bears the 7'-hydroxytryptophan mark. Residue Trp419 is glycosylated (C-linked (Man) hydroxytryptophan). One copy of the B-26; approximate repeat lies at 421 to 430; sequence ATPKPWTVWK. 4-hydroxyproline is present on Pro425. Residue Trp426 is glycosylated (C-linked (Man) tryptophan). Position 429 is a 7'-hydroxytryptophan (Trp429). Residue Trp429 is glycosylated (C-linked (Man) hydroxytryptophan). Residues 431–440 form a B-27; approximate repeat; that stretch reads ATPKPWTAWR. At Pro435 the chain carries 4-hydroxyproline. Residue Trp436 is glycosylated (C-linked (Man) tryptophan). At Trp439 the chain carries 7'-hydroxytryptophan. Trp439 is a glycosylation site (C-linked (Man) hydroxytryptophan). The interval 452-507 is disordered; the sequence is GHGYGGYGKPGKPGKPGSKGPRGPAGPPGATGKTGRTGATGKRGPPGYPGKPGVPG. A compositionally biased stretch (gly residues) spans 453–462; the sequence is HGYGGYGKPG. The Collagen-like domain occupies 459–510; the sequence is GKPGKPGKPGSKGPRGPAGPPGATGKTGRTGATGKRGPPGYPGKPGVPGRNG. Residues 466–496 are compositionally biased toward low complexity; it reads KPGSKGPRGPAGPPGATGKTGRTGATGKRGP. A 4-hydroxyproline mark is found at Pro497, Pro500, and Pro506.

As to expression, produced by the byssal gland.

The protein resides in the secreted. In terms of biological role, provides adhesiveness to the mussel's foot. Mussels produce one of the strongest water insoluble glues. The mussel's adhesive is a bundle of threads, called a byssus, formed by a fibrous collagenous core coated with adhesive proteins. The sequence is that of Foot protein 1 variant 1 from Perna viridis (Asian green mussel).